Consider the following 353-residue polypeptide: H(2)-forming methylenetetrahydromethanopterin dehydrogenase-related protein MJ1338 (353 aa).

This sequence belongs to the HMD family.

This Methanocaldococcus jannaschii (strain ATCC 43067 / DSM 2661 / JAL-1 / JCM 10045 / NBRC 100440) (Methanococcus jannaschii) protein is H(2)-forming methylenetetrahydromethanopterin dehydrogenase-related protein MJ1338.